Reading from the N-terminus, the 424-residue chain is Arginine biosynthesis bifunctional protein ArgJ (424 aa).

Residues threonine 166, lysine 192, threonine 203, glutamate 290, asparagine 419, and threonine 424 each coordinate substrate. The Nucleophile role is filled by threonine 203.

Belongs to the ArgJ family. Heterotetramer of two alpha and two beta chains.

It is found in the cytoplasm. The catalysed reaction is N(2)-acetyl-L-ornithine + L-glutamate = N-acetyl-L-glutamate + L-ornithine. It catalyses the reaction L-glutamate + acetyl-CoA = N-acetyl-L-glutamate + CoA + H(+). It participates in amino-acid biosynthesis; L-arginine biosynthesis; L-ornithine and N-acetyl-L-glutamate from L-glutamate and N(2)-acetyl-L-ornithine (cyclic): step 1/1. The protein operates within amino-acid biosynthesis; L-arginine biosynthesis; N(2)-acetyl-L-ornithine from L-glutamate: step 1/4. Its function is as follows. Catalyzes two activities which are involved in the cyclic version of arginine biosynthesis: the synthesis of N-acetylglutamate from glutamate and acetyl-CoA as the acetyl donor, and of ornithine by transacetylation between N(2)-acetylornithine and glutamate. The polypeptide is Arginine biosynthesis bifunctional protein ArgJ (Colwellia psychrerythraea (strain 34H / ATCC BAA-681) (Vibrio psychroerythus)).